Reading from the N-terminus, the 198-residue chain is COMM domain-containing protein 9 (198 aa).

A2 carries the post-translational modification N-acetylalanine. In terms of domain architecture, COMM spans 122 to 196; the sequence is RLVDLDWRVD…RIRDQLSAVA (75 aa).

The protein belongs to the COMM domain-containing protein 9 family. As to quaternary structure, component of the commander complex consisting of the CCC subcomplex and the retriever subcomplex. Component of the CCC (COMMD/CCDC22/CCDC93) subcomplex consisting of COMMD1, COMMD2, COMMD3, COMMD4, COMMD5, COMMD6, COMMD7, COMMD8, COMMD9, COMMD10, CCDC22 and CCDC93; within the complex forms a heterodimer with COMMD7. Interacts with RELB and NFKB1/p105. Interacts with CCDC22, CCDC93, SCNN1B, CUL1. Ubiquitous.

It is found in the nucleus. It localises to the cytoplasmic vesicle. Functionally, scaffold protein in the commander complex that is essential for endosomal recycling of transmembrane cargos; the commander complex is composed of the CCC subcomplex and the retriever subcomplex. May modulate activity of cullin-RING E3 ubiquitin ligase (CRL) complexes. May down-regulate activation of NF-kappa-B. Modulates Na(+) transport in epithelial cells by regulation of apical cell surface expression of amiloride-sensitive sodium channel (ENaC) subunits. The sequence is that of COMM domain-containing protein 9 (COMMD9) from Homo sapiens (Human).